The chain runs to 273 residues: Hemin import ATP-binding protein HmuV (273 aa).

The 255-residue stretch at 2 to 256 (LTAHHLDVAR…AHIAQCYGFA (255 aa)) folds into the ABC transporter domain. 34-41 (GRNGAGKS) lines the ATP pocket.

Belongs to the ABC transporter superfamily. Heme (hemin) importer (TC 3.A.1.14.5) family. As to quaternary structure, the complex is composed of two ATP-binding proteins (HmuV), two transmembrane proteins (HmuU) and a solute-binding protein (HmuT).

The protein resides in the cell inner membrane. Part of the ABC transporter complex HmuTUV involved in hemin import. Responsible for energy coupling to the transport system. In Burkholderia ambifaria (strain ATCC BAA-244 / DSM 16087 / CCUG 44356 / LMG 19182 / AMMD) (Burkholderia cepacia (strain AMMD)), this protein is Hemin import ATP-binding protein HmuV.